The sequence spans 1297 residues: Regulator of V-ATPase in vacuolar membrane protein 1 (1297 aa).

Composition is skewed to basic and acidic residues over residues 1161–1171 and 1260–1269; these read DQEIHENKDSQ and AVEKTHDSPK. 2 disordered regions span residues 1161-1182 and 1260-1297; these read DQEIHENKDSQRNSTNEPVRNK and AVEKTHDSPKLGKTLMGQDIRPTPDDVPEFNESAFSFE.

In terms of assembly, component of the RAVE complex composed of rav1, rav2 and skp1. Interacts with vam2.

The protein localises to the cytoplasm. It localises to the nucleus. The protein resides in the endomembrane system. Component of the RAVE complex which is required for stable assembly of the vacuolar ATPase complex V-ATPase. The polypeptide is Regulator of V-ATPase in vacuolar membrane protein 1 (rav1) (Schizosaccharomyces pombe (strain 972 / ATCC 24843) (Fission yeast)).